Consider the following 262-residue polypeptide: Ribose-5-phosphate isomerase A (262 aa).

Substrate is bound by residues 33–36 (TGST), 89–92 (DGAD), and 102–105 (KGGG). Residue E111 is the Proton acceptor of the active site. Position 129 (K129) interacts with substrate.

It belongs to the ribose 5-phosphate isomerase family. In terms of assembly, homodimer.

The catalysed reaction is aldehydo-D-ribose 5-phosphate = D-ribulose 5-phosphate. Its pathway is carbohydrate degradation; pentose phosphate pathway; D-ribose 5-phosphate from D-ribulose 5-phosphate (non-oxidative stage): step 1/1. In terms of biological role, catalyzes the reversible conversion of ribose-5-phosphate to ribulose 5-phosphate. This is Ribose-5-phosphate isomerase A from Cereibacter sphaeroides (strain ATCC 17023 / DSM 158 / JCM 6121 / CCUG 31486 / LMG 2827 / NBRC 12203 / NCIMB 8253 / ATH 2.4.1.) (Rhodobacter sphaeroides).